Reading from the N-terminus, the 178-residue chain is Ribosome maturation factor RimP (178 aa).

This sequence belongs to the RimP family.

It localises to the cytoplasm. In terms of biological role, required for maturation of 30S ribosomal subunits. In Streptococcus pyogenes serotype M5 (strain Manfredo), this protein is Ribosome maturation factor RimP.